Reading from the N-terminus, the 340-residue chain is MTMSLIAGVAAFVLTVLAMPHFITYYKIKKIGGQQMHEDVKQHLAKAGTPTMGGTVFLVVAILISLIFNFHVFTEGHQAYGATAGILFVILIYGIIGFLDDFLKIFHQINEGLKPWQKMALQIVAGLLFYFIHVLPSGTNSLAIGGLTIQLGVFYVLFVLFWIVGFSNAVNLTDGIDGLASVSVVISLIAYGIIAFVKGELAILTIIITMIGALLGFFVFNHKPAKVFMGDVGSLSLGAMLAVISIALRVEWTLLLIGVVYVLETASVMLQVSYFKYTKRKYGEGRRIFRMTPFHHHLELGGISGKGEKWSEWKVDAFLWTIGALASSITLWMVLGNVMK.

Transmembrane regions (helical) follow at residues 3 to 23 (MSLI…PHFI), 53 to 73 (GGTV…FHVF), 79 to 99 (AYGA…IGFL), 119 to 139 (MALQ…PSGT), 144 to 164 (IGGL…FWIV), 176 to 196 (IDGL…IIAF), 200 to 220 (ELAI…FFVF), 227 to 247 (VFMG…ISIA), 250 to 270 (VEWT…SVML), and 315 to 335 (VDAF…WMVL).

This sequence belongs to the glycosyltransferase 4 family. MraY subfamily. The cofactor is Mg(2+).

The protein resides in the cell membrane. It carries out the reaction UDP-N-acetyl-alpha-D-muramoyl-L-alanyl-gamma-D-glutamyl-L-lysyl-D-alanyl-D-alanine + di-trans,octa-cis-undecaprenyl phosphate = Mur2Ac(oyl-L-Ala-gamma-D-Glu-L-Lys-D-Ala-D-Ala)-di-trans,octa-cis-undecaprenyl diphosphate + UMP. It participates in cell wall biogenesis; peptidoglycan biosynthesis. In terms of biological role, catalyzes the initial step of the lipid cycle reactions in the biosynthesis of the cell wall peptidoglycan: transfers peptidoglycan precursor phospho-MurNAc-pentapeptide from UDP-MurNAc-pentapeptide onto the lipid carrier undecaprenyl phosphate, yielding undecaprenyl-pyrophosphoryl-MurNAc-pentapeptide, known as lipid I. In Streptococcus thermophilus (strain CNRZ 1066), this protein is Phospho-N-acetylmuramoyl-pentapeptide-transferase.